Reading from the N-terminus, the 858-residue chain is DNA mismatch repair protein MutS (858 aa).

Residue 609 to 616 (GPNMSGKS) participates in ATP binding.

This sequence belongs to the DNA mismatch repair MutS family.

In terms of biological role, this protein is involved in the repair of mismatches in DNA. It is possible that it carries out the mismatch recognition step. This protein has a weak ATPase activity. The polypeptide is DNA mismatch repair protein MutS (Enterococcus faecalis (strain ATCC 700802 / V583)).